Consider the following 496-residue polypeptide: Beta-amylase (496 aa).

Positions 54, 94, and 102 each coordinate substrate. Glutamate 187 serves as the catalytic Proton donor. Lysine 296, histidine 301, and threonine 343 together coordinate substrate. Glutamate 381 serves as the catalytic Proton acceptor. Substrate is bound by residues 382-383 (NA) and arginine 421.

The protein belongs to the glycosyl hydrolase 14 family.

The enzyme catalyses Hydrolysis of (1-&gt;4)-alpha-D-glucosidic linkages in polysaccharides so as to remove successive maltose units from the non-reducing ends of the chains.. The chain is Beta-amylase (BMY1) from Trifolium repens (Creeping white clover).